The sequence spans 512 residues: Ribose import ATP-binding protein RbsA 1 (512 aa).

ABC transporter domains follow at residues 8 to 244 (FRME…IGRE) and 254 to 502 (AHRG…LNIA). 40-47 (GENGAGKS) is a binding site for ATP.

This sequence belongs to the ABC transporter superfamily. Ribose importer (TC 3.A.1.2.1) family. In terms of assembly, the complex is composed of an ATP-binding protein (RbsA), two transmembrane proteins (RbsC) and a solute-binding protein (RbsB).

The protein resides in the cell inner membrane. The catalysed reaction is D-ribose(out) + ATP + H2O = D-ribose(in) + ADP + phosphate + H(+). Functionally, part of the ABC transporter complex RbsABC involved in ribose import. Responsible for energy coupling to the transport system. This chain is Ribose import ATP-binding protein RbsA 1, found in Rhizobium johnstonii (strain DSM 114642 / LMG 32736 / 3841) (Rhizobium leguminosarum bv. viciae).